The sequence spans 931 residues: Dual O-methyltransferase/FAD-dependent monooxygenase elcB (931 aa).

The tract at residues Met-1 to Asp-463 is O-methyltransferase. Asp-254 is a binding site for S-adenosyl-L-methionine. His-304 serves as the catalytic Proton acceptor. A disordered region spans residues Thr-455–Asn-474. Positions Gly-462–Asn-474 are enriched in polar residues. The interval Thr-464–Leu-931 is FAD-dependent monooxygenase. Glu-520, Arg-604, Asp-836, and Ala-849 together coordinate FAD.

In the C-terminal section; belongs to the paxM FAD-dependent monooxygenase family. This sequence in the N-terminal section; belongs to the class I-like SAM-binding methyltransferase superfamily. Cation-independent O-methyltransferase family. COMT subfamily.

The catalysed reaction is nor-toralactone + S-adenosyl-L-methionine = toralactone + S-adenosyl-L-homocysteine + H(+). It catalyses the reaction toralactone + NADH + O2 + H(+) = 1-(3,4,5-trihydroxy-7-methoxynaphthalen-2-yl)propan-2-one + CO2 + NAD(+). It participates in secondary metabolite biosynthesis. Dual O-methyltransferase/FAD-dependent monooxygenase; part of the gene cluster that mediates the biosynthesis of elsinochrome C, a perelyenequinone phytotoxin structurally similar to cercosporin. The first step of elsinochrome C biosynthesis is performed by the polyketide synthase elcA which catalyzes the formation of nor-toralactone. The starter unit acyltransferase (SAT) domain of elcA initiates polyketide extension by the selective utilization of acetyl-CoA, which is elongated to the heptaketide in the beta-ketoacyl synthase (KS) domain by successive condensations with six malonyl units introduced by the malonyl acyltransferase (MAT) domain. The product template (PT) domain catalyzes C4-C9 and C2-C11 aldol cyclizations and dehydrations to a trihydroxynaphthalene, which is thought to be delivered to the thioesterase (TE) domain for product release. The bifunctional enzyme elcB then methylates nor-toralactone to toralactone before conducting an unusual oxidative aromatic ring opening. The next step in perylenequinone biosynthesis is an O-methylation at the nascent OH-6 of the elcB product performed by the O-methyltransferase elcD. The oxidative coupling of the two monomeric naphthol units in perylenequinone biosynthesis is catalyzed by the FAD-dependent monooxygenase elcE and the multicopper oxidase elcG. ElcG might catalyze the first intermolecular coupling in a regio- and stereo-selective manner via a phenol radical coupling mechanism and the elcE could forge the second C-C bond intramolecularly via a hydride transfer mechanism. The fasciclin domain-containing protein elcF might also play a role duting this step. The last piece of the puzzle in the biosynthesis of elsinochrome C is the additional annulation by enolate coupling to afford the dihydrobenzo(ghi)perylenequinone system, catalyzed by the FAD-dependent monooxygenase elcH. In Phaeosphaeria nodorum (strain SN15 / ATCC MYA-4574 / FGSC 10173) (Glume blotch fungus), this protein is Dual O-methyltransferase/FAD-dependent monooxygenase elcB.